Consider the following 353-residue polypeptide: DNA integrity scanning protein DisA (353 aa).

Residues 6–144 (DKELMNILKI…GGIKYVLRDS (139 aa)) form the DAC domain. ATP-binding positions include G73, L91, and 104 to 108 (TRHRT).

Belongs to the DisA family. Homooctamer. Requires Mg(2+) as cofactor.

The enzyme catalyses 2 ATP = 3',3'-c-di-AMP + 2 diphosphate. In terms of biological role, participates in a DNA-damage check-point that is active prior to asymmetric division when DNA is damaged. DisA forms globular foci that rapidly scan along the chromosomes during sporulation, searching for lesions. When a lesion is present, DisA pauses at the lesion site. This triggers a cellular response that culminates in a temporary block in sporulation initiation. Also has diadenylate cyclase activity, catalyzing the condensation of 2 ATP molecules into cyclic di-AMP (c-di-AMP). c-di-AMP acts as a signaling molecule that couples DNA integrity with progression of sporulation. The rise in c-di-AMP level generated by DisA while scanning the chromosome, operates as a positive signal that advances sporulation; upon encountering a lesion, the DisA focus arrests at the damaged site and halts c-di-AMP synthesis. The polypeptide is DNA integrity scanning protein DisA (Clostridium botulinum (strain Kyoto / Type A2)).